A 108-amino-acid chain; its full sequence is Peptidyl-prolyl cis-trans isomerase FKBP1B (108 aa).

Residues 20–108 (GQTCVVHYTG…IFGVELLNLE (89 aa)) form the PPIase FKBP-type domain.

It belongs to the FKBP-type PPIase family. FKBP1 subfamily. Identified in a complex composed of RYR2, FKBP1B, PKA catalytic subunit, PRKAR2A, AKAP6, and the protein phosphatases PP2A and PP1. Interacts directly with RYR2.

Its subcellular location is the cytoplasm. It is found in the sarcoplasmic reticulum. The enzyme catalyses [protein]-peptidylproline (omega=180) = [protein]-peptidylproline (omega=0). With respect to regulation, inhibited by both FK506 and rapamycin. Its function is as follows. Has the potential to contribute to the immunosuppressive and toxic effects of FK506 and rapamycin. PPIases accelerate the folding of proteins. It catalyzes the cis-trans isomerization of proline imidic peptide bonds in oligopeptides. The polypeptide is Peptidyl-prolyl cis-trans isomerase FKBP1B (FKBP1B) (Oryctolagus cuniculus (Rabbit)).